The chain runs to 311 residues: Transcription factor bHLH145 (311 aa).

The region spanning 253–302 is the bHLH domain; it reads FLKRSKLSSNKIGEEKIFETVSLLRSVVPGEELVDPILVIDRAIDYLKSL.

In terms of assembly, homodimer.

The protein localises to the nucleus. This chain is Transcription factor bHLH145 (BHLH145), found in Arabidopsis thaliana (Mouse-ear cress).